We begin with the raw amino-acid sequence, 141 residues long: Hemoglobin subunit alpha (141 aa).

A Globin domain is found at 1 to 141 (VLSPADKSNV…VSTVLVSKYR (141 aa)). The residue at position 3 (Ser-3) is a Phosphoserine. Residues Lys-7 and Lys-11 each carry the N6-succinyllysine modification. Lys-16 carries the N6-acetyllysine; alternate modification. At Lys-16 the chain carries N6-succinyllysine; alternate. Tyr-24 is subject to Phosphotyrosine. The residue at position 35 (Ser-35) is a Phosphoserine. Lys-40 bears the N6-succinyllysine mark. Ser-49 is modified (phosphoserine). His-58 lines the O2 pocket. Position 87 (His-87) interacts with heme b. At Ser-102 the chain carries Phosphoserine. Phosphothreonine is present on Thr-108. Phosphoserine is present on Ser-124. Thr-134 carries the post-translational modification Phosphothreonine. Ser-138 carries the post-translational modification Phosphoserine.

This sequence belongs to the globin family. In terms of assembly, heterotetramer of two alpha chains and two beta chains. Red blood cells.

Functionally, involved in oxygen transport from the lung to the various peripheral tissues. Hemopressin acts as an antagonist peptide of the cannabinoid receptor CNR1. Hemopressin-binding efficiently blocks cannabinoid receptor CNR1 and subsequent signaling. The sequence is that of Hemoglobin subunit alpha (HBA) from Chalinolobus morio (Chocolate-wattled bat).